Reading from the N-terminus, the 154-residue chain is 6,7-dimethyl-8-ribityllumazine synthase (154 aa).

5-amino-6-(D-ribitylamino)uracil is bound by residues F26, 60–62 (ALE), and 84–86 (CII). Residue 89-90 (ET) coordinates (2S)-2-hydroxy-3-oxobutyl phosphate. The Proton donor role is filled by H92. Residue N117 coordinates 5-amino-6-(D-ribitylamino)uracil. R131 is a (2S)-2-hydroxy-3-oxobutyl phosphate binding site.

It belongs to the DMRL synthase family.

The catalysed reaction is (2S)-2-hydroxy-3-oxobutyl phosphate + 5-amino-6-(D-ribitylamino)uracil = 6,7-dimethyl-8-(1-D-ribityl)lumazine + phosphate + 2 H2O + H(+). It participates in cofactor biosynthesis; riboflavin biosynthesis; riboflavin from 2-hydroxy-3-oxobutyl phosphate and 5-amino-6-(D-ribitylamino)uracil: step 1/2. Catalyzes the formation of 6,7-dimethyl-8-ribityllumazine by condensation of 5-amino-6-(D-ribitylamino)uracil with 3,4-dihydroxy-2-butanone 4-phosphate. This is the penultimate step in the biosynthesis of riboflavin. The chain is 6,7-dimethyl-8-ribityllumazine synthase from Acidovorax sp. (strain JS42).